Reading from the N-terminus, the 1548-residue chain is Dual oxidase 2 (1548 aa).

Residues 1-25 (MLRARPEALMLLGALLTGSLGPSGN) form the signal peptide. The Extracellular segment spans residues 26–601 (QDALSLPWEV…EGSSPGFAIT (576 aa)). A peroxidase-like; mediates peroxidase activity region spans residues 30-596 (SLPWEVQRYD…VLDFFEGSSP (567 aa)). Residues N100, N348, N382, N455, and N537 are each glycosylated (N-linked (GlcNAc...) asparagine). A disulfide bond links C124 and C1162. Residues 602 to 622 (IIALCCLPLVSLLLSGVVAYF) traverse the membrane as a helical segment. At 623–1041 (RGREHKKLQK…KRFVENYRRH (419 aa)) the chain is on the cytoplasmic side. EF-hand domains follow at residues 819 to 854 (PQDM…FMKG), 855 to 890 (SPED…FIEI), and 899 to 934 (QLAE…HDSE). 9 residues coordinate Ca(2+): D832, D834, N836, Y838, E843, D868, D870, N872, and E879. The interaction with TXNDC11 stretch occupies residues 960-1245 (ISCRVSFITR…GSYALIQLPT (286 aa)). Positions 971-991 (PGERSHPQGLGPPAPEAPELG) are disordered. Residues 1042 to 1062 (IVCVAIFSAICVGVFADRAYY) form a helical membrane-spanning segment. At 1063–1076 (YGFASPPSDIAQTT) the chain is on the extracellular side. A helical membrane pass occupies residues 1077–1097 (LVGIILSRGTAASVSFMFSYI). Residues 1084-1266 (RGTAASVSFM…YGGDKLVSLS (183 aa)) form the Ferric oxidoreductase domain. Over 1098–1128 (LLTMCRNLITFLRETFLNRYVPFDAAVDFHR) the chain is Cytoplasmic. Residues 1129 to 1151 (WIAMAAVVLAILHSAGHAVNVYI) form a helical membrane-spanning segment. Over 1152–1185 (FSVSPLSLLACIFPNVFVNDGSKLPQKFYWWFFQ) the chain is Extracellular. Residues 1186-1206 (TVPGMTGVLLLLVLAIMYVFA) traverse the membrane as a helical segment. Over 1207 to 1223 (SHHFRRRSFRGFWLTHH) the chain is Cytoplasmic. Transmembrane regions (helical) follow at residues 1224-1244 (LYIL…IQLP) and 1245-1265 (TFHI…LVSL). The Cytoplasmic segment spans residues 1266–1548 (SRKKVEISVV…AHFMHHYENF (283 aa)). The 107-residue stretch at 1267–1373 (RKKVEISVVK…DGPFGEGHQE (107 aa)) folds into the FAD-binding FR-type domain.

It in the N-terminal section; belongs to the peroxidase family. As to quaternary structure, heterodimer with DUOXA2; disulfide-linked. Interacts with TXNDC11, TPO and CYBA. Post-translationally, N-glycosylated. As to expression, expressed in colon, small intestine, duodenum and tracheal surface epithelial cells (at protein level). Expressed in thyrocytes. Also detected in kidney, liver, lung, pancreas, prostate, salivary glands, rectum and testis.

The protein localises to the apical cell membrane. It localises to the cell junction. The enzyme catalyses NADH + O2 + H(+) = H2O2 + NAD(+). The catalysed reaction is NADPH + O2 + H(+) = H2O2 + NADP(+). Its pathway is hormone biosynthesis; thyroid hormone biosynthesis. With respect to regulation, peroxidase activity is inhibited by aminobenzohydrazide. The NADPH oxidase activity is calcium-dependent. Its function is as follows. Generates hydrogen peroxide which is required for the activity of thyroid peroxidase/TPO and lactoperoxidase/LPO. Plays a role in thyroid hormones synthesis and lactoperoxidase-mediated antimicrobial defense at the surface of mucosa. May have its own peroxidase activity through its N-terminal peroxidase-like domain. In Homo sapiens (Human), this protein is Dual oxidase 2 (DUOX2).